The chain runs to 430 residues: Histidine--tRNA ligase (430 aa).

It belongs to the class-II aminoacyl-tRNA synthetase family. As to quaternary structure, homodimer.

The protein localises to the cytoplasm. It carries out the reaction tRNA(His) + L-histidine + ATP = L-histidyl-tRNA(His) + AMP + diphosphate + H(+). This is Histidine--tRNA ligase from Chlorobium limicola (strain DSM 245 / NBRC 103803 / 6330).